The primary structure comprises 174 residues: MAQSLTPSVETDSKTGPSKAISFQDYLDLSALDWARLRAVLAPTLYVDYTKIGKEKWDAMSADDFMAMVSNDDFLGDLCVKTQHLIGATYWERVSESKVIGHHQLRAAHQVYTSPDLKTVKLRGHSHATNEHYYVKSGGVWKFAGLKPEVRWNEYKFEEVFKGSYTQSEKQSLP.

Tyr49 lines the substrate pocket. Catalysis depends on residues His84 and His109. Asn130 contributes to the substrate binding site.

The protein belongs to the scytalone dehydratase family. As to quaternary structure, homotrimer. Each subunit contains an active site, located in the central part of the hydrophobic core of the monomer, which functions independently.

Functionally, scytalone dehydratase-like protein; part of the Pks2 gene cluster that mediates the formation of infectious structures (appressoria), enabling these fungi to kill insects faster. The product of the Pks2 gene cluster is different from the one of Pks1 and has still not been identified. In Metarhizium majus (strain ARSEF 297), this protein is Scytalone dehydratase-like protein Arp1.